Consider the following 375-residue polypeptide: Matrix protein (375 aa).

This sequence belongs to the morbillivirus/respirovirus/rubulavirus M protein family.

It localises to the virion. In terms of biological role, the M protein has a crucial role in virus assembly and interacts with the RNP complex as well as with the viral membrane. The polypeptide is Matrix protein (M) (Homo sapiens (Human)).